The chain runs to 291 residues: Undecaprenyl-diphosphatase (291 aa).

Helical transmembrane passes span 1–21 (MFII…LTEF), 48–68 (SAFT…AWVF), 102–122 (LHVL…DDFI), 126–146 (LFSV…MIIA), 162–182 (ISYF…WPGF), 203–223 (SDFT…LSLL), 231–251 (IADI…GLIA), and 267–287 (FAIY…GFGI).

The protein belongs to the UppP family.

Its subcellular location is the cell membrane. The enzyme catalyses di-trans,octa-cis-undecaprenyl diphosphate + H2O = di-trans,octa-cis-undecaprenyl phosphate + phosphate + H(+). Catalyzes the dephosphorylation of undecaprenyl diphosphate (UPP). Confers resistance to bacitracin. This chain is Undecaprenyl-diphosphatase, found in Staphylococcus aureus (strain USA300).